The sequence spans 355 residues: Uroporphyrinogen decarboxylase (355 aa).

Substrate is bound by residues 27–31 (RQAGR), aspartate 77, tyrosine 154, threonine 209, and histidine 327.

Belongs to the uroporphyrinogen decarboxylase family. As to quaternary structure, homodimer.

Its subcellular location is the cytoplasm. The enzyme catalyses uroporphyrinogen III + 4 H(+) = coproporphyrinogen III + 4 CO2. It participates in porphyrin-containing compound metabolism; protoporphyrin-IX biosynthesis; coproporphyrinogen-III from 5-aminolevulinate: step 4/4. In terms of biological role, catalyzes the decarboxylation of four acetate groups of uroporphyrinogen-III to yield coproporphyrinogen-III. This Yersinia pestis bv. Antiqua (strain Antiqua) protein is Uroporphyrinogen decarboxylase.